We begin with the raw amino-acid sequence, 156 residues long: Snaclec A10 (156 aa).

A signal peptide spans 1-23 (MGRSISVSFGLLVVFLSLSGIGA). 3 cysteine pairs are disulfide-bonded: C27–C38, C55–C154, and C129–C146. The C-type lectin domain maps to 34-155 (YDQHCYQAVD…CGQPYRFTCE (122 aa)).

It belongs to the snaclec family. As to quaternary structure, heterodimer; disulfide-linked. As to expression, expressed by the venom gland.

It is found in the secreted. Interferes with one step of hemostasis (modulation of platelet aggregation, or coagulation cascade, for example). The chain is Snaclec A10 from Macrovipera lebetinus (Levantine viper).